The following is a 421-amino-acid chain: MTESVLDYMTRLGRAAREASRVIGRASTAQKNRALQATAAALDEARDELSAANALDLAYGQANGLEPAMLERLALTPARIDSMIVGLRQVASLADPVGAIRDMSYRPSGIQVGKMRVPLGVVGIIYESRPNVTIDAASLCLKSGNATILRGGSEAIHSNRAIAACIARGLAEAGLPAAVVQVVETTDRAAVGALITMPEYVDVIVPRGGKGLIERVSRDARVPVIKHLDGICHVYVSAHADLPKAQKIAFNAKTYRYGICGAMETLLVDQTIAADFLPAMAAQFREKGVELRGCERTRELIDVMPATEDDWHTEYLAAILSIRVVSGLDEAIEHINHYGSHHSDAIVSDHQSQIRRFMAEVDSSSVMVNAPTSFADGFEYGLGAEIGISTDKLHARGPVGLEGLTCEKYIVIGDGQLRGHA.

This sequence belongs to the gamma-glutamyl phosphate reductase family.

It localises to the cytoplasm. The catalysed reaction is L-glutamate 5-semialdehyde + phosphate + NADP(+) = L-glutamyl 5-phosphate + NADPH + H(+). The protein operates within amino-acid biosynthesis; L-proline biosynthesis; L-glutamate 5-semialdehyde from L-glutamate: step 2/2. Catalyzes the NADPH-dependent reduction of L-glutamate 5-phosphate into L-glutamate 5-semialdehyde and phosphate. The product spontaneously undergoes cyclization to form 1-pyrroline-5-carboxylate. The chain is Gamma-glutamyl phosphate reductase from Pseudomonas syringae pv. tomato (strain ATCC BAA-871 / DC3000).